We begin with the raw amino-acid sequence, 464 residues long: Protein FAM90A22 (464 aa).

Disordered regions lie at residues 1–43, 70–389, and 415–437; these read MMAR…PRLK, PATL…HDGA, and HSPE…SEAP. Basic and acidic residues-rich tracts occupy residues 74 to 89 and 97 to 114; these read GKKE…KPRA and NKDK…DPQR. The segment covering 182–197 has biased composition (low complexity); that stretch reads SLSPLRKTSLSSSSSL.

Belongs to the FAM90 family.

This chain is Protein FAM90A22, found in Homo sapiens (Human).